A 217-amino-acid polypeptide reads, in one-letter code: NADPH-dependent 3-demethoxyubiquinone 3-hydroxylase, mitochondrial (217 aa).

The N-terminal 34 residues, M1 to F34, are a transit peptide targeting the mitochondrion. 2 consecutive repeat copies span residues A48–L129 and G130–L217. Residues A48 to L217 are 2 X approximate tandem repeats. R51 contributes to the NADH binding site. E60, E90, H93, E142, E178, and H181 together coordinate Fe cation. NADH is bound by residues K208, Y212, and R216.

The protein belongs to the COQ7 family. As to quaternary structure, component of a multi-subunit COQ enzyme complex. Interacts with COQ8B and COQ6. Interacts with COQ9. Fe cation serves as cofactor.

The protein resides in the mitochondrion inner membrane. It catalyses the reaction a 5-methoxy-2-methyl-3-(all-trans-polyprenyl)benzoquinone + NADH + O2 = a 3-demethylubiquinone + NAD(+) + H2O. It functions in the pathway cofactor biosynthesis; ubiquinone biosynthesis. Functionally, catalyzes the hydroxylation of the 5-methoxy-2-methyl-3-(all-trans-polyprenyl)benzoquinone at the C6 position and participates in the biosynthesis of ubiquinone. Catalyzes the reaction through a substrate-mediated reduction pathway, whereby NADH shuttles electrons to 5-methoxy-2-methyl-3-(all-trans-decaprenyl)benzoquinone, which then transfers the electrons to the two Fe(3+) centers. The binding of 5-methoxy-2-methyl-3-(all-trans-polyprenyl)benzoquinone (DMQn) mediates reduction of the diiron center by nicotinamide adenine dinucleotide (NADH) and initiates oxygen activation for subsequent DMQ hydroxylation. The physiological substrates are 5-methoxy-2-methyl-3-(all-trans-nonaprenyl)benzoquinone (DMQ(9)) and 5-methoxy-2-methyl-3-(all-trans-decaprenyl)benzoquinone (DMQ(10)), however in vitro the enzyme does not have any specificity concerning the length of the polyprenyl tail, and accepts tails of various lengths with similar efficiency. Also has a structural role in the COQ enzyme complex, stabilizing other COQ polypeptides. Involved in lifespan determination in a ubiquinone-independent manner. Plays a role in modulating mitochondrial stress responses, acting in the nucleus, perhaps via regulating gene expression, independent of its characterized mitochondrial function in ubiquinone biosynthesis. The polypeptide is NADPH-dependent 3-demethoxyubiquinone 3-hydroxylase, mitochondrial (Bos taurus (Bovine)).